We begin with the raw amino-acid sequence, 157 residues long: SsrA-binding protein (157 aa).

It belongs to the SmpB family.

Its subcellular location is the cytoplasm. Functionally, required for rescue of stalled ribosomes mediated by trans-translation. Binds to transfer-messenger RNA (tmRNA), required for stable association of tmRNA with ribosomes. tmRNA and SmpB together mimic tRNA shape, replacing the anticodon stem-loop with SmpB. tmRNA is encoded by the ssrA gene; the 2 termini fold to resemble tRNA(Ala) and it encodes a 'tag peptide', a short internal open reading frame. During trans-translation Ala-aminoacylated tmRNA acts like a tRNA, entering the A-site of stalled ribosomes, displacing the stalled mRNA. The ribosome then switches to translate the ORF on the tmRNA; the nascent peptide is terminated with the 'tag peptide' encoded by the tmRNA and targeted for degradation. The ribosome is freed to recommence translation, which seems to be the essential function of trans-translation. The sequence is that of SsrA-binding protein from Bacillus licheniformis (strain ATCC 14580 / DSM 13 / JCM 2505 / CCUG 7422 / NBRC 12200 / NCIMB 9375 / NCTC 10341 / NRRL NRS-1264 / Gibson 46).